Here is a 606-residue protein sequence, read N- to C-terminus: Prostaglandin G/H synthase 1 (606 aa).

Positions 1–30 (MSRSSPSLRLPVLLLLLLLLLLPPPPPVLP) are cleaved as a signal peptide. The region spanning 38-76 (PVNPCCYFPCQHQGVCVRVALDRYQCDCTRTGYSGPNCT) is the EGF-like domain. Disulfide bonds link Cys-42/Cys-53, Cys-43/Cys-165, Cys-47/Cys-63, and Cys-65/Cys-75. N-linked (GlcNAc...) asparagine glycosylation is found at Asn-74, Asn-110, and Asn-150. His-213 functions as the Proton acceptor in the catalytic mechanism. Residue Tyr-391 is the For cyclooxygenase activity of the active site. His-394 is a heme b binding site. Asn-416 is a glycosylation site (N-linked (GlcNAc...) asparagine). An intrachain disulfide couples Cys-575 to Cys-581.

This sequence belongs to the prostaglandin G/H synthase family. As to quaternary structure, homodimer. Heme b serves as cofactor.

The protein localises to the microsome membrane. Its subcellular location is the endoplasmic reticulum membrane. The enzyme catalyses (5Z,8Z,11Z,14Z)-eicosatetraenoate + AH2 + 2 O2 = prostaglandin H2 + A + H2O. The catalysed reaction is (5Z,8Z,11Z,14Z)-eicosatetraenoate + 2 O2 = prostaglandin G2. It catalyses the reaction prostaglandin G2 + AH2 = prostaglandin H2 + A + H2O. It carries out the reaction (9Z,12Z)-octadecadienoate + AH2 + O2 = (9R)-hydroxy-(10E,12Z)-octadecadienoate + A + H2O. The enzyme catalyses (9Z,12Z)-octadecadienoate + AH2 + O2 = (9S)-hydroxy-(10E,12Z)-octadecadienoate + A + H2O. The catalysed reaction is (9Z,12Z)-octadecadienoate + AH2 + O2 = (13S)-hydroxy-(9Z,11E)-octadecadienoate + A + H2O. It catalyses the reaction (9Z,12Z)-octadecadienoate + AH2 + O2 = (13R)-hydroxy-(9Z,11E)-octadecadienoate + A + H2O. It functions in the pathway lipid metabolism; prostaglandin biosynthesis. The cyclooxygenase activity is inhibited by nonsteroidal anti-inflammatory drugs (NSAIDs) including ibuprofen, flurbiprofen, ketoprofen, naproxen, flurbiprofen, anirolac, fenclofenac and diclofenac. Dual cyclooxygenase and peroxidase that plays an important role in the biosynthesis pathway of prostanoids, a class of C20 oxylipins mainly derived from arachidonate ((5Z,8Z,11Z,14Z)-eicosatetraenoate, AA, C20:4(n-6)), with a particular role in the inflammatory response. The cyclooxygenase activity oxygenates AA to the hydroperoxy endoperoxide prostaglandin G2 (PGG2), and the peroxidase activity reduces PGG2 to the hydroxy endoperoxide prostaglandin H2 (PGH2), the precursor of all 2-series prostaglandins and thromboxanes. This complex transformation is initiated by abstraction of hydrogen at carbon 13 (with S-stereochemistry), followed by insertion of molecular O2 to form the endoperoxide bridge between carbon 9 and 11 that defines prostaglandins. The insertion of a second molecule of O2 (bis-oxygenase activity) yields a hydroperoxy group in PGG2 that is then reduced to PGH2 by two electrons. Involved in the constitutive production of prostanoids in particular in the stomach and platelets. In gastric epithelial cells, it is a key step in the generation of prostaglandins, such as prostaglandin E2 (PGE2), which plays an important role in cytoprotection. In platelets, it is involved in the generation of thromboxane A2 (TXA2), which promotes platelet activation and aggregation, vasoconstriction and proliferation of vascular smooth muscle cells. Can also use linoleate (LA, (9Z,12Z)-octadecadienoate, C18:2(n-6)) as substrate and produce hydroxyoctadecadienoates (HODEs) in a regio- and stereospecific manner, being (9R)-HODE ((9R)-hydroxy-(10E,12Z)-octadecadienoate) and (13S)-HODE ((13S)-hydroxy-(9Z,11E)-octadecadienoate) its major products. The chain is Prostaglandin G/H synthase 1 (PTGS1) from Oryctolagus cuniculus (Rabbit).